A 392-amino-acid chain; its full sequence is Dual-specificity RNA methyltransferase RlmN (392 aa).

Catalysis depends on E115, which acts as the Proton acceptor. In terms of domain architecture, Radical SAM core spans 121 to 358; that stretch reads EVDRGTLCIS…YKAGYASPIR (238 aa). The cysteines at positions 128 and 369 are disulfide-linked. [4Fe-4S] cluster contacts are provided by C135, C139, and C142. S-adenosyl-L-methionine contacts are provided by residues 195–196, S227, 249–251, and N326; these read GE and SFH. C369 functions as the S-methylcysteine intermediate in the catalytic mechanism.

The protein belongs to the radical SAM superfamily. RlmN family. [4Fe-4S] cluster is required as a cofactor.

The protein localises to the cytoplasm. The catalysed reaction is adenosine(2503) in 23S rRNA + 2 reduced [2Fe-2S]-[ferredoxin] + 2 S-adenosyl-L-methionine = 2-methyladenosine(2503) in 23S rRNA + 5'-deoxyadenosine + L-methionine + 2 oxidized [2Fe-2S]-[ferredoxin] + S-adenosyl-L-homocysteine. It catalyses the reaction adenosine(37) in tRNA + 2 reduced [2Fe-2S]-[ferredoxin] + 2 S-adenosyl-L-methionine = 2-methyladenosine(37) in tRNA + 5'-deoxyadenosine + L-methionine + 2 oxidized [2Fe-2S]-[ferredoxin] + S-adenosyl-L-homocysteine. Its function is as follows. Specifically methylates position 2 of adenine 2503 in 23S rRNA and position 2 of adenine 37 in tRNAs. m2A2503 modification seems to play a crucial role in the proofreading step occurring at the peptidyl transferase center and thus would serve to optimize ribosomal fidelity. The sequence is that of Dual-specificity RNA methyltransferase RlmN from Jannaschia sp. (strain CCS1).